A 522-amino-acid chain; its full sequence is Acetylcholine receptor subunit delta (522 aa).

Residues 1–21 (MGNIHFVYLLISCLYYSGCSG) form the signal peptide. The Extracellular segment spans residues 22 to 245 (VNEEERLIND…VTFYLIIRRK (224 aa)). N-linked (GlcNAc...) asparagine glycans are attached at residues Asn91, Asn164, and Asn229. A disulfide bond links Cys151 and Cys165. 3 helical membrane passes run 246-270 (PLFY…AFYL), 278-295 (MSTA…LLLT), and 312-333 (YLMF…VLNF). Over 334–476 (HFRTPSTHVL…WNLVGQTIDR (143 aa)) the chain is Cytoplasmic. The residue at position 393 (Tyr393) is a Phosphotyrosine; by Tyr-kinases. A helical membrane pass occupies residues 477–497 (LSMFIITPVMVLGTIFIFVMG).

It belongs to the ligand-gated ion channel (TC 1.A.9) family. Acetylcholine receptor (TC 1.A.9.1) subfamily. In terms of assembly, pentamer of two alpha chains, and one each of the beta, delta, and gamma chains.

Its subcellular location is the postsynaptic cell membrane. The protein resides in the cell membrane. It carries out the reaction K(+)(in) = K(+)(out). The enzyme catalyses Na(+)(in) = Na(+)(out). In terms of biological role, after binding acetylcholine, the AChR responds by an extensive change in conformation that affects all subunits and leads to opening of an ion-conducting channel across the plasma membrane. The sequence is that of Acetylcholine receptor subunit delta (chrnd) from Tetronarce californica (Pacific electric ray).